The chain runs to 440 residues: tRNA(Ile)-lysidine synthase (440 aa).

28 to 33 (SGGMDS) is a binding site for ATP.

Belongs to the tRNA(Ile)-lysidine synthase family.

The protein localises to the cytoplasm. It carries out the reaction cytidine(34) in tRNA(Ile2) + L-lysine + ATP = lysidine(34) in tRNA(Ile2) + AMP + diphosphate + H(+). Functionally, ligates lysine onto the cytidine present at position 34 of the AUA codon-specific tRNA(Ile) that contains the anticodon CAU, in an ATP-dependent manner. Cytidine is converted to lysidine, thus changing the amino acid specificity of the tRNA from methionine to isoleucine. The polypeptide is tRNA(Ile)-lysidine synthase (Xanthomonas axonopodis pv. citri (strain 306)).